The sequence spans 279 residues: Protein BASIC PENTACYSTEINE2 (279 aa).

Residues 126–167 (TKKRKTNAKAGSTPKAKKPRKPKDENSNNNNNNNTNVTRVKP) are disordered. The segment covering 152–161 (SNNNNNNNTN) has biased composition (low complexity).

It belongs to the BBR/BPC family. In terms of tissue distribution, expressed in seedlings, leaves and pistils. Detected in the base of flowers and tips of carpels, in sepal and petal vasculature, in pollen grains, in young rosette, in the lateral and tip of primary roots, and in ovule at the exception of the outer integument.

It is found in the nucleus. In terms of biological role, transcriptional regulator that specifically binds to GA-rich elements (GAGA-repeats) present in regulatory sequences of genes involved in developmental processes. The protein is Protein BASIC PENTACYSTEINE2 of Arabidopsis thaliana (Mouse-ear cress).